The following is a 250-amino-acid chain: Probable dihydroorotate dehydrogenase B (NAD(+)), electron transfer subunit (250 aa).

In terms of domain architecture, FAD-binding FR-type spans M1–V89. Residues C200, C205, C208, and C216 each coordinate [2Fe-2S] cluster.

It belongs to the PyrK family. Heterotetramer of 2 PyrK and 2 PyrD type B subunits. [2Fe-2S] cluster serves as cofactor. Requires FAD as cofactor.

The protein operates within pyrimidine metabolism; UMP biosynthesis via de novo pathway; orotate from (S)-dihydroorotate (NAD(+) route): step 1/1. Responsible for channeling the electrons from the oxidation of dihydroorotate from the FMN redox center in the PyrD type B subunit to the ultimate electron acceptor NAD(+). In Thermoplasma volcanium (strain ATCC 51530 / DSM 4299 / JCM 9571 / NBRC 15438 / GSS1), this protein is Probable dihydroorotate dehydrogenase B (NAD(+)), electron transfer subunit.